We begin with the raw amino-acid sequence, 262 residues long: 5'-nucleotidase SurE (262 aa).

The a divalent metal cation site is built by aspartate 8, aspartate 9, serine 39, and asparagine 95.

It belongs to the SurE nucleotidase family. A divalent metal cation serves as cofactor.

It localises to the cytoplasm. The catalysed reaction is a ribonucleoside 5'-phosphate + H2O = a ribonucleoside + phosphate. In terms of biological role, nucleotidase that shows phosphatase activity on nucleoside 5'-monophosphates. This Methanothermobacter thermautotrophicus (strain ATCC 29096 / DSM 1053 / JCM 10044 / NBRC 100330 / Delta H) (Methanobacterium thermoautotrophicum) protein is 5'-nucleotidase SurE.